Consider the following 137-residue polypeptide: Small ribosomal subunit protein uS12 (137 aa).

Positions 1 to 57 (MPTINQLVRKPRRAQVTKSKSPAMNVGYNSRKKVQTKLASPQKRGVATRVGTMTPKK) are disordered. 3-methylthioaspartic acid is present on Asp102.

The protein belongs to the universal ribosomal protein uS12 family. In terms of assembly, part of the 30S ribosomal subunit. Contacts proteins S8 and S17. May interact with IF1 in the 30S initiation complex.

Its function is as follows. With S4 and S5 plays an important role in translational accuracy. Interacts with and stabilizes bases of the 16S rRNA that are involved in tRNA selection in the A site and with the mRNA backbone. Located at the interface of the 30S and 50S subunits, it traverses the body of the 30S subunit contacting proteins on the other side and probably holding the rRNA structure together. The combined cluster of proteins S8, S12 and S17 appears to hold together the shoulder and platform of the 30S subunit. This chain is Small ribosomal subunit protein uS12, found in Lactococcus lactis subsp. lactis (strain IL1403) (Streptococcus lactis).